A 206-amino-acid chain; its full sequence is Guanylate kinase (206 aa).

One can recognise a Guanylate kinase-like domain in the interval 5–183 (FNLLILSGPS…SKEIILSIAK (179 aa)). 12–19 (GPSGAGKS) contacts ATP.

The protein belongs to the guanylate kinase family.

It is found in the cytoplasm. The enzyme catalyses GMP + ATP = GDP + ADP. Essential for recycling GMP and indirectly, cGMP. The chain is Guanylate kinase (gmk) from Helicobacter pylori (strain J99 / ATCC 700824) (Campylobacter pylori J99).